The chain runs to 91 residues: DNA-directed RNA polymerase subunit omega (91 aa).

It belongs to the RNA polymerase subunit omega family. As to quaternary structure, the RNAP catalytic core consists of 2 alpha, 1 beta, 1 beta' and 1 omega subunit. When a sigma factor is associated with the core the holoenzyme is formed, which can initiate transcription.

It catalyses the reaction RNA(n) + a ribonucleoside 5'-triphosphate = RNA(n+1) + diphosphate. Promotes RNA polymerase assembly. Latches the N- and C-terminal regions of the beta' subunit thereby facilitating its interaction with the beta and alpha subunits. The chain is DNA-directed RNA polymerase subunit omega from Enterobacter sp. (strain 638).